The primary structure comprises 519 residues: 2-isopropylmalate synthase (519 aa).

The Pyruvate carboxyltransferase domain occupies 5–267 (VVIFDTTLRD…STNINYKEIY (263 aa)). Mn(2+) contacts are provided by Asp14, His202, His204, and Asn238. Positions 392–519 (SLKFFSVQSI…LKILKDFKKK (128 aa)) are regulatory domain.

It belongs to the alpha-IPM synthase/homocitrate synthase family. LeuA type 1 subfamily. Homodimer. The cofactor is Mn(2+).

The protein resides in the cytoplasm. It catalyses the reaction 3-methyl-2-oxobutanoate + acetyl-CoA + H2O = (2S)-2-isopropylmalate + CoA + H(+). The protein operates within amino-acid biosynthesis; L-leucine biosynthesis; L-leucine from 3-methyl-2-oxobutanoate: step 1/4. Functionally, catalyzes the condensation of the acetyl group of acetyl-CoA with 3-methyl-2-oxobutanoate (2-ketoisovalerate) to form 3-carboxy-3-hydroxy-4-methylpentanoate (2-isopropylmalate). The sequence is that of 2-isopropylmalate synthase from Buchnera aphidicola subsp. Acyrthosiphon pisum (strain APS) (Acyrthosiphon pisum symbiotic bacterium).